A 92-amino-acid chain; its full sequence is Large ribosomal subunit protein eL43y (92 aa).

The C4-type zinc-finger motif lies at 39 to 60 (CEFCGKYGVKRKAVGIWGCKDC).

It belongs to the eukaryotic ribosomal protein eL43 family.

In Arabidopsis thaliana (Mouse-ear cress), this protein is Large ribosomal subunit protein eL43y (RPL37AC).